The chain runs to 157 residues: Thioredoxin 2 (157 aa).

The first 22 residues, 1 to 22, serve as a signal peptide directing secretion; that stretch reads MKHILALVVFIISFFCFKDVNC. Residues 46 to 157 form the Thioredoxin domain; that stretch reads LRMYNKMPRL…ELTSTIRKHL (112 aa). Residues cysteine 82 and cysteine 85 each act as nucleophile in the active site. Cysteine 82 and cysteine 85 form a disulfide bridge.

It belongs to the thioredoxin family. In terms of assembly, monomer. Component of the translocon PTEX complex composed of HSP101, EXP2, PTEX150, PTEX88 and TRX2. The disulfide bond between Cys-82 and Cys-85 acts as a redox-active center and is reduced by thioredoxin reductase TRXR.

Its function is as follows. Participates in various redox reactions through the reversible oxidation of its active center dithiol to a disulfide and catalyzes dithiol-disulfide exchange reactions. As part of the translocon PTEX complex, plays a role in the export of parasite proteins into the host erythrocyte. The translocon PTEX complex is a multi-protein machinery resident in the parasite parasitophorous vacuolar membrane, responsible for protein secretion into host cells. May contribute to the unfolding of proteins containing the PEXEL localization motif before their passage through the translocon or regulate the PTEX complex function. The polypeptide is Thioredoxin 2 (Plasmodium berghei (strain Anka)).